Here is a 411-residue protein sequence, read N- to C-terminus: Fructose-1,6-bisphosphatase, chloroplastic (411 aa).

Residues Met-1–Met-53 constitute a chloroplast transit peptide. Glu-133, Glu-162, Asp-183, Leu-185, and Asp-186 together coordinate Mg(2+). Asp-186 to Ser-189 serves as a coordination point for substrate. Cys-227 and Cys-232 form a disulfide bridge. Substrate-binding residues include Asn-291, Tyr-323, Tyr-341, Tyr-343, and Lys-353. Residue Glu-359 participates in Mg(2+) binding.

Belongs to the FBPase class 1 family. As to quaternary structure, homotetramer. Mg(2+) serves as cofactor.

It is found in the plastid. It localises to the chloroplast stroma. It catalyses the reaction beta-D-fructose 1,6-bisphosphate + H2O = beta-D-fructose 6-phosphate + phosphate. It participates in carbohydrate biosynthesis; Calvin cycle. The polypeptide is Fructose-1,6-bisphosphatase, chloroplastic (FBP) (Brassica napus (Rape)).